The following is a 260-amino-acid chain: Uroplakin-1b (260 aa).

Over 2–15 (AKDDSTVRCFQGLL) the chain is Cytoplasmic. A helical membrane pass occupies residues 16 to 36 (IFGNVIIGMCSIALMAECIFF). The Extracellular segment spans residues 37-60 (VSDQNSLYPLLEATNNDDIYAAAW). The chain crosses the membrane as a helical span at residues 61 to 81 (IGMFVGICLFCLSVLGIVGIM). At 82–86 (KSNRK) the chain is on the cytoplasmic side. Residues 87 to 107 (ILLVYFILMFIVYAFEVASCI) form a helical membrane-spanning segment. Over 108-229 (TAATQRDFFT…ELISGPMNRH (122 aa)) the chain is Extracellular. Residues 230-250 (AWGVAWFGFAILCWTFWVLLG) form a helical membrane-spanning segment. The Cytoplasmic portion of the chain corresponds to 251 to 260 (TMFYWSRIDY).

Belongs to the tetraspanin (TM4SF) family. As to quaternary structure, heterodimer with uroplakin-3A (UPK3A) or uroplakin-3B (UPK3B). In terms of processing, N-glycosylated with high-mannose oligosaccharides. In terms of tissue distribution, bladder epithelium.

Its subcellular location is the membrane. In terms of biological role, component of the asymmetric unit membrane (AUM); a highly specialized biomembrane elaborated by terminally differentiated urothelial cells. May play an important role in normal bladder epithelial physiology, possibly in regulating membrane permeability of superficial umbrella cells or in stabilizing the apical membrane through AUM/cytoskeletal interactions. The sequence is that of Uroplakin-1b (UPK1B) from Bos taurus (Bovine).